A 270-amino-acid chain; its full sequence is Phosphonoacetaldehyde hydrolase (270 aa).

The active-site Nucleophile is the Asp-11. The Mg(2+) site is built by Asp-11 and Ala-13. Lys-53 functions as the Schiff-base intermediate with substrate in the catalytic mechanism. Asp-187 serves as a coordination point for Mg(2+).

This sequence belongs to the HAD-like hydrolase superfamily. PhnX family. As to quaternary structure, homodimer. Mg(2+) is required as a cofactor.

The catalysed reaction is phosphonoacetaldehyde + H2O = acetaldehyde + phosphate + H(+). Involved in phosphonate degradation. The chain is Phosphonoacetaldehyde hydrolase from Salmonella choleraesuis (strain SC-B67).